We begin with the raw amino-acid sequence, 99 residues long: Imizoquin biosynthesis cluster protein A (99 aa).

The protein operates within secondary metabolite biosynthesis. Functionally, part of the gene cluster that mediates the biosynthesis of imizoquins A to D, tripeptide-derived alkaloids that serve a protective role against oxidative stress that are essential for normal germination. ImqB is a canonical three-module NRPS that assembles the tripeptide backbone of the imizoquins via condensation of Trp, Tyr, and Leu-derived precursors. N-methylation by imqF and phenol oxidation by imqC, followed by cyclization via the FAD-dependent oxidase imqH carry out the three-step transformation of L-tyrosine into tetrahydroisoquinoline. Importantly, this sequence requires the presence of a free amine in the tyrosine moiety, indicating that isoquinoline formation occurs prior to peptide bond formation. The imidazolidin-4-one ring of imizoquins could form following additional oxidation of the methyl-derived bridgehead carbon by imqH. Lastly, O-methylation by imqG and leucine hydroxylation by imqE complete biosynthesis of the imizoquins. The polypeptide is Imizoquin biosynthesis cluster protein A (Aspergillus flavus (strain ATCC 200026 / FGSC A1120 / IAM 13836 / NRRL 3357 / JCM 12722 / SRRC 167)).